A 1026-amino-acid chain; its full sequence is Multidrug resistance protein MdtC (1026 aa).

11 consecutive transmembrane segments (helical) span residues 12–32 (VATT…FSLL), 333–353 (EVEQ…FIFL), 360–380 (LIPA…MYLC), 387–407 (LSLM…IVVL), 431–451 (VGFT…PLLL), 463–483 (FAVT…TLTP), 528–548 (WVLA…VSIP), 853–873 (LLLI…LYES), 897–917 (LFGA…IGIV), 953–973 (PIMM…LTHG), and 984–1004 (ITIV…TPVV).

Belongs to the resistance-nodulation-cell division (RND) (TC 2.A.6) family. MdtC subfamily. Part of a tripartite efflux system composed of MdtA, MdtB and MdtC. MdtC forms a heteromultimer with MdtB.

It is found in the cell inner membrane. The chain is Multidrug resistance protein MdtC from Serratia proteamaculans (strain 568).